The following is a 508-amino-acid chain: Photosystem II CP47 reaction center protein (508 aa).

A run of 6 helical transmembrane segments spans residues 21 to 36 (SVHL…WAGS), 101 to 115 (IVLS…IWHW), 140 to 156 (GIHL…FGAF), 203 to 218 (IAAG…FHLT), 237 to 252 (VLSS…AFVV), and 457 to 472 (CFAL…HGAR).

It belongs to the PsbB/PsbC family. PsbB subfamily. As to quaternary structure, PSII is composed of 1 copy each of membrane proteins PsbA, PsbB, PsbC, PsbD, PsbE, PsbF, PsbH, PsbI, PsbJ, PsbK, PsbL, PsbM, PsbT, PsbX, PsbY, PsbZ, Psb30/Ycf12, at least 3 peripheral proteins of the oxygen-evolving complex and a large number of cofactors. It forms dimeric complexes. The cofactor is Binds multiple chlorophylls. PSII binds additional chlorophylls, carotenoids and specific lipids..

It is found in the plastid. The protein resides in the chloroplast thylakoid membrane. In terms of biological role, one of the components of the core complex of photosystem II (PSII). It binds chlorophyll and helps catalyze the primary light-induced photochemical processes of PSII. PSII is a light-driven water:plastoquinone oxidoreductase, using light energy to abstract electrons from H(2)O, generating O(2) and a proton gradient subsequently used for ATP formation. The protein is Photosystem II CP47 reaction center protein of Chlorokybus atmophyticus (Soil alga).